Here is a 213-residue protein sequence, read N- to C-terminus: Thiamine-phosphate synthase (213 aa).

4-amino-2-methyl-5-(diphosphooxymethyl)pyrimidine-binding positions include 40 to 44 (QFREK) and asparagine 75. Residues aspartate 76 and aspartate 95 each contribute to the Mg(2+) site. Serine 113 is a 4-amino-2-methyl-5-(diphosphooxymethyl)pyrimidine binding site. 139–141 (TPS) is a binding site for 2-[(2R,5Z)-2-carboxy-4-methylthiazol-5(2H)-ylidene]ethyl phosphate. Position 142 (lysine 142) interacts with 4-amino-2-methyl-5-(diphosphooxymethyl)pyrimidine. Residues glycine 171 and 191-192 (IS) each bind 2-[(2R,5Z)-2-carboxy-4-methylthiazol-5(2H)-ylidene]ethyl phosphate.

It belongs to the thiamine-phosphate synthase family. Requires Mg(2+) as cofactor.

The catalysed reaction is 2-[(2R,5Z)-2-carboxy-4-methylthiazol-5(2H)-ylidene]ethyl phosphate + 4-amino-2-methyl-5-(diphosphooxymethyl)pyrimidine + 2 H(+) = thiamine phosphate + CO2 + diphosphate. It carries out the reaction 2-(2-carboxy-4-methylthiazol-5-yl)ethyl phosphate + 4-amino-2-methyl-5-(diphosphooxymethyl)pyrimidine + 2 H(+) = thiamine phosphate + CO2 + diphosphate. The enzyme catalyses 4-methyl-5-(2-phosphooxyethyl)-thiazole + 4-amino-2-methyl-5-(diphosphooxymethyl)pyrimidine + H(+) = thiamine phosphate + diphosphate. It functions in the pathway cofactor biosynthesis; thiamine diphosphate biosynthesis; thiamine phosphate from 4-amino-2-methyl-5-diphosphomethylpyrimidine and 4-methyl-5-(2-phosphoethyl)-thiazole: step 1/1. In terms of biological role, condenses 4-methyl-5-(beta-hydroxyethyl)thiazole monophosphate (THZ-P) and 2-methyl-4-amino-5-hydroxymethyl pyrimidine pyrophosphate (HMP-PP) to form thiamine monophosphate (TMP). The chain is Thiamine-phosphate synthase from Staphylococcus aureus (strain JH1).